Reading from the N-terminus, the 403-residue chain is F-box protein At2g40925 (403 aa).

The F-box domain maps to 21–71 (NRHDCEIPPDLMIEILIRLPTKSFMRFKCVSKQWSPLISGRYFCNRLFTCV).

This is F-box protein At2g40925 from Arabidopsis thaliana (Mouse-ear cress).